The following is a 292-amino-acid chain: Phosphotriesterase homology protein (292 aa).

3 residues coordinate Zn(2+): His-12, His-14, and Glu-125. A beta-D-glucose-binding site is contributed by 148–149 (HN). His-158 lines the Zn(2+) pocket. 3 residues coordinate beta-D-glucose: Gly-176, Asp-178, and Arg-181. Zn(2+)-binding residues include His-186 and Asp-243. The beta-D-glucose site is built by Asp-280 and Arg-284.

This sequence belongs to the metallo-dependent hydrolases superfamily. Phosphotriesterase family. Monomer. Zn(2+) serves as cofactor.

Its activity is regulated as follows. Activity is higher in the enzyme containing Mn(2+) than that containing Zn(2+). Functionally, catalyzes the hydrolysis of phosphorylated glyceryl acetates in which the presence of a phosphate group is required for the enzymatic hydrolysis. Hydrolyzes a dibutyl glycerol derivative suggesting it acts on phosphoglycerol substrates with a butyrate leaving group. Also active with aromatic acetates and propionates. No activity with various sugar phosphates, with various nitrophenylphosphate or nitrophenylphosphonate derivatives, or with phosphorylated or non-phosphorylated sugar lactones tested. Does not hydrolyze non-phosphorylated carboxyesters with long chain leaving groups. No general esterase, aminopeptidase, sulfatase, phosphatase, carbonic anhydrase, phosphodiesterase, and phosphotriesterase activities detected when tested with the following non-specific substrates: p-nitrophenyl acetate, L-alanine nitroanilide, p-nitrophenyl sulfate, bis(p-nitrophenyl) phosphate, paraoxon, and p-nitrophenyl phosphate. The protein is Phosphotriesterase homology protein of Escherichia coli (strain K12).